Here is a 94-residue protein sequence, read N- to C-terminus: Protein S100-A1 (94 aa).

EF-hand domains lie at I13 to V48 and K50 to A85. 7 residues coordinate Ca(2+): K28, E33, D63, N65, D67, E69, and E74. C86 carries the post-translational modification S-nitrosocysteine.

This sequence belongs to the S-100 family. Dimer of either two alpha chains, or two beta chains, or one alpha and one beta chain. Also forms heterodimers with S100P. Interacts with AGER. Interacts with CAPZA1. Interacts with FKBP4. Interacts with RYR1 and RYR2. Interacts with CACYBP in a calcium-dependent manner. Interacts with PPP5C (via TPR repeats); the interaction is calcium-dependent and modulates PPP5C activity. Interacts with ATP2A2 and PLN in a Ca(2+)-dependent manner. Interacts with mitochondrial F1-ATPase subunits ATP5F1A and ATP5F1B; these interactions increase F1-ATPase activity. Glutathionylated; glutathionylation increases affinity to calcium about 10-fold. As to expression, although predominant among the water-soluble brain proteins, S100 is also found in a variety of other tissues.

The protein resides in the cytoplasm. It localises to the sarcoplasmic reticulum. It is found in the mitochondrion. Small calcium binding protein that plays important roles in several biological processes such as Ca(2+) homeostasis, chondrocyte biology and cardiomyocyte regulation. In response to an increase in intracellular Ca(2+) levels, binds calcium which triggers conformational changes. These changes allow interactions with specific target proteins and modulate their activity. Regulates a network in cardiomyocytes controlling sarcoplasmic reticulum Ca(2+) cycling and mitochondrial function through interaction with the ryanodine receptors RYR1 and RYR2, sarcoplasmic reticulum Ca(2+)-ATPase/ATP2A2 and mitochondrial F1-ATPase. Facilitates diastolic Ca(2+) dissociation and myofilament mechanics in order to improve relaxation during diastole. The polypeptide is Protein S100-A1 (S100a1) (Rattus norvegicus (Rat)).